Reading from the N-terminus, the 295-residue chain is Protease HtpX homolog (295 aa).

Helical transmembrane passes span 15 to 35 (LVMA…GYAF) and 39 to 59 (AQTG…VILG). Residue histidine 143 coordinates Zn(2+). Residue glutamate 144 is part of the active site. Histidine 147 contributes to the Zn(2+) binding site. 2 consecutive transmembrane segments (helical) span residues 159 to 179 (ALAL…AMWW) and 195 to 215 (VIML…ASMA). A Zn(2+)-binding site is contributed by glutamate 224.

This sequence belongs to the peptidase M48B family. Zn(2+) serves as cofactor.

The protein resides in the cell membrane. The polypeptide is Protease HtpX homolog (Ligilactobacillus salivarius (strain UCC118) (Lactobacillus salivarius)).